The following is a 135-amino-acid chain: Galectin-1 (135 aa).

Ala-2 is modified (N-acetylalanine). A Galectin domain is found at Gly-4–Glu-135. N6-acetyllysine occurs at positions 13, 19, and 29. Position 30 is a phosphoserine (Ser-30). A beta-D-galactoside contacts are provided by residues His-45 to Arg-49, His-53, Asn-62, and Trp-69 to Glu-72. At Lys-108 the chain carries N6-acetyllysine; alternate. N6-succinyllysine; alternate is present on Lys-108. N6-acetyllysine is present on Lys-128.

In terms of assembly, binds LGALS3BP. Interacts with CD2, CD3, CD4, CD6, CD7, CD43, ALCAM and CD45. Interacts with laminin. Interacts with SUSD2. Exists in a reversible and active monomer-homodimer equilibrium, the mononomer/dimer state is regulated by lectin concentration. Interacts with cargo receptor TMED10; the interaction mediates the translocation from the cytoplasm into the ERGIC (endoplasmic reticulum-Golgi intermediate compartment) and thereby secretion.

It is found in the cytoplasm. The protein localises to the secreted. Its subcellular location is the extracellular space. The protein resides in the extracellular matrix. Functionally, lectin that binds beta-galactoside and a wide array of complex carbohydrates. Plays a role in regulating apoptosis, cell proliferation and cell differentiation. Inhibits CD45 protein phosphatase activity and therefore the dephosphorylation of Lyn kinase. Strong inducer of T-cell apoptosis. This chain is Galectin-1 (LGALS1), found in Cricetulus griseus (Chinese hamster).